The following is a 314-amino-acid chain: MMVEAKVPLKLTLFGEHAVVYDRPAIAMTISESLKVKVSENDKFLIISPSLNIKGVKLDLNEMKIESDEAKKVLRYVFEVLNYFEMKKPVKIEINSTVEPSVGLGTSAAVIVGTVAAYSKYLGIDLSRDEIAKISHNIELKVQGIASRMDTYTETYGGLIYFPAGGKGFEKIDTNFELTAGYIRRSMSTADVLWRVRTLKESNKEVFENILDVIGEITNRAKSLIVEQNFEELGLLMYVNHGLLFSLGITSPEADEIVSRAKQLGIKGCKISGGGAGGSIICIKSVEAEVLLRSYNARIVNSTLTKDGVIFSIL.

ATP is bound at residue 103–109 (GLGTSAA). The Proton acceptor role is filled by aspartate 150.

The protein belongs to the GHMP kinase family. Mevalonate kinase subfamily. In terms of assembly, homodimer. The cofactor is Mg(2+).

It is found in the cytoplasm. The catalysed reaction is (R)-mevalonate + ATP = (R)-5-phosphomevalonate + ADP + H(+). It participates in isoprenoid biosynthesis; isopentenyl diphosphate biosynthesis via mevalonate pathway; isopentenyl diphosphate from (R)-mevalonate: step 1/3. In terms of biological role, catalyzes the phosphorylation of (R)-mevalonate (MVA) to (R)-mevalonate 5-phosphate (MVAP). Functions in the mevalonate (MVA) pathway leading to isopentenyl diphosphate (IPP), a key precursor for the biosynthesis of isoprenoid compounds such as archaeal membrane lipids. The sequence is that of Mevalonate kinase from Saccharolobus solfataricus (strain ATCC 35092 / DSM 1617 / JCM 11322 / P2) (Sulfolobus solfataricus).